The sequence spans 1207 residues: DNA-directed RNA polymerase subunit beta' (1207 aa).

4 residues coordinate Zn(2+): cysteine 60, cysteine 62, cysteine 75, and cysteine 78. Residues aspartate 450, aspartate 452, and aspartate 454 each contribute to the Mg(2+) site. Zn(2+) contacts are provided by cysteine 818, cysteine 892, cysteine 899, and cysteine 902.

This sequence belongs to the RNA polymerase beta' chain family. In terms of assembly, the RNAP catalytic core consists of 2 alpha, 1 beta, 1 beta' and 1 omega subunit. When a sigma factor is associated with the core the holoenzyme is formed, which can initiate transcription. The cofactor is Mg(2+). It depends on Zn(2+) as a cofactor.

The catalysed reaction is RNA(n) + a ribonucleoside 5'-triphosphate = RNA(n+1) + diphosphate. DNA-dependent RNA polymerase catalyzes the transcription of DNA into RNA using the four ribonucleoside triphosphates as substrates. The protein is DNA-directed RNA polymerase subunit beta' of Lactococcus lactis subsp. cremoris (strain SK11).